A 215-amino-acid chain; its full sequence is Transmembrane emp24 domain-containing protein 11 (215 aa).

Positions Met1–Ala17 are cleaved as a signal peptide. Topologically, residues Phe18–Asp167 are lumenal. Residues Glu27 to Val125 form the GOLD domain. An N-linked (GlcNAc...) asparagine glycan is attached at Asn105. Positions Gln136–Asn171 form a coiled coil. Residues Arg168–Trp185 form a helical membrane-spanning segment. Residues Trp186 to Val215 are Cytoplasmic-facing. Residues Phe208 to Phe209 carry the COPII vesicle coat-binding motif. A COPI vesicle coat-binding motif is present at residues Phe208–Val215.

This sequence belongs to the EMP24/GP25L family.

It is found in the endoplasmic reticulum membrane. Its function is as follows. Part of a complex whose function is to bind Ca(2+) to the ER membrane and thereby regulate the retention of ER resident proteins. This chain is Transmembrane emp24 domain-containing protein 11 (Tmed11), found in Mus musculus (Mouse).